A 319-amino-acid chain; its full sequence is Probable enoyl-CoA hydratase alpha subunit (319 aa).

The DUF35 stretch occupies residues 199–298; sequence FEAAKQRRLV…EIGMPVVLDW (100 aa).

This sequence belongs to the thioester dehydratase family. As to quaternary structure, heterodimer composed of ChsH1 and ChsH2. Two heterodimers combine to form a heterotetramer. The complex interacts with Ltp2 via the DUF35 C-terminal region of ChsH2.

In terms of biological role, probably involved in bile acid degradation. The protein is Probable enoyl-CoA hydratase alpha subunit of Thermomonospora curvata (strain ATCC 19995 / DSM 43183 / JCM 3096 / KCTC 9072 / NBRC 15933 / NCIMB 10081 / Henssen B9).